We begin with the raw amino-acid sequence, 203 residues long: Ras-related protein Rab-8B (203 aa).

GTP contacts are provided by residues 22–29, 70–74, and 128–131; these read GDSGVGKS, DTAGQ, and NKCD. Residues Cys202 and Cys203 are each lipidated (S-geranylgeranyl cysteine).

It belongs to the small GTPase superfamily. Rab family.

It is found in the cell membrane. Protein transport. Probably involved in vesicular traffic. This chain is Ras-related protein Rab-8B (rab8B), found in Dictyostelium discoideum (Social amoeba).